The primary structure comprises 750 residues: uncharacterized protein (750 aa).

3 consecutive transmembrane segments (helical) span residues 1 to 21, 465 to 485, and 586 to 606; these read MSII…SIVT, YGAN…ISYL, and GMFG…VAVS.

The protein localises to the membrane. This is an uncharacterized protein from Saccharomyces cerevisiae (strain ATCC 204508 / S288c) (Baker's yeast).